Reading from the N-terminus, the 431-residue chain is Glutamate--tRNA ligase 1 (431 aa).

Positions 11–21 (PSPTGDLHLGG) match the 'HIGH' region motif. The 'KMSKS' region signature appears at 203 to 207 (KLSKR). An ATP-binding site is contributed by lysine 206.

It belongs to the class-I aminoacyl-tRNA synthetase family. Glutamate--tRNA ligase type 1 subfamily. Monomer.

It is found in the cytoplasm. It catalyses the reaction tRNA(Glu) + L-glutamate + ATP = L-glutamyl-tRNA(Glu) + AMP + diphosphate. Its function is as follows. Catalyzes the attachment of glutamate to tRNA(Glu) in a two-step reaction: glutamate is first activated by ATP to form Glu-AMP and then transferred to the acceptor end of tRNA(Glu). In Rubrobacter xylanophilus (strain DSM 9941 / JCM 11954 / NBRC 16129 / PRD-1), this protein is Glutamate--tRNA ligase 1.